Here is a 623-residue protein sequence, read N- to C-terminus: V-type proton ATPase catalytic subunit A (623 aa).

252-259 provides a ligand contact to ATP; it reads GAFGCGKT.

It belongs to the ATPase alpha/beta chains family. As to quaternary structure, V-ATPase is a heteromultimeric enzyme composed of a peripheral catalytic V1 complex (main components: subunits A, B, C, D, E, and F) attached to an integral membrane V0 proton pore complex (main component: the proteolipid protein).

It catalyses the reaction ATP + H2O + 4 H(+)(in) = ADP + phosphate + 5 H(+)(out). Functionally, catalytic subunit of the peripheral V1 complex of vacuolar ATPase. V-ATPase vacuolar ATPase is responsible for acidifying a variety of intracellular compartments in eukaryotic cells. The protein is V-type proton ATPase catalytic subunit A of Daucus carota (Wild carrot).